The following is a 232-amino-acid chain: Vesicle transport through interaction with t-SNAREs homolog 1B (232 aa).

At alanine 2 the chain carries N-acetylalanine. 2 interaction with CLINT1 regions span residues 2 to 23 (AASA…GLLE) and 69 to 73 (APLTF). The Cytoplasmic segment spans residues 2-208 (AASAASSEHF…SRKVITNKLL (207 aa)). Residues 36 to 98 (AGTEEKKKLV…AKLHREVRST (63 aa)) adopt a coiled-coil conformation. The residue at position 107 (arginine 107) is an Omega-N-methylarginine. The residue at position 138 (serine 138) is a Phosphoserine. A coiled-coil region spans residues 160 to 201 (GTEIIEELGEQRDQLERTKSRLVNTNENLSKSRKILRSMSRK). A helical; Anchor for type IV membrane protein transmembrane segment spans residues 209–229 (LSVIILLELAILVGLVYYKFF). The Vesicular segment spans residues 230–232 (RHH).

This sequence belongs to the VTI1 family. Forms a SNARE complex with STX7, STX8 and VAMP8 which functions in the homotypic fusion of late endosomes. Component of the SNARE complex composed of STX7, STX8, VAMP7 and VIT1B that is required for heterotypic fusion of late endosomes with lysosomes. May interact with STX17. Interacts with CLINT1. Broadly expressed.

It is found in the early endosome membrane. Its subcellular location is the late endosome membrane. It localises to the lysosome membrane. The protein localises to the cytoplasmic granule. The protein resides in the recycling endosome membrane. V-SNARE that mediates vesicle transport pathways through interactions with t-SNAREs on the target membrane. These interactions are proposed to mediate aspects of the specificity of vesicle trafficking and to promote fusion of the lipid bilayers. The protein is Vesicle transport through interaction with t-SNAREs homolog 1B (Vti1b) of Mus musculus (Mouse).